We begin with the raw amino-acid sequence, 194 residues long: Imidazoleglycerol-phosphate dehydratase (194 aa).

The protein belongs to the imidazoleglycerol-phosphate dehydratase family.

The protein localises to the cytoplasm. It catalyses the reaction D-erythro-1-(imidazol-4-yl)glycerol 3-phosphate = 3-(imidazol-4-yl)-2-oxopropyl phosphate + H2O. The protein operates within amino-acid biosynthesis; L-histidine biosynthesis; L-histidine from 5-phospho-alpha-D-ribose 1-diphosphate: step 6/9. The polypeptide is Imidazoleglycerol-phosphate dehydratase (Bacillus cereus (strain ZK / E33L)).